Reading from the N-terminus, the 503-residue chain is Xylan O-acetyltransferase 12 (503 aa).

At 1-54 (MWSALFSHLREVHKRSGVKEEKLIMKSPAAAGEAAGCHKPQATATNKMTVLQSP) the chain is on the cytoplasmic side. The chain crosses the membrane as a helical; Signal-anchor for type II membrane protein span at residues 55 to 77 (LGLRTILTSLVAFFIVVSSVSLL). The Lumenal portion of the chain corresponds to 78–503 (FDRSQDAQAQ…EFLYAYLMHK (426 aa)). 4 disulfide bridges follow: Cys153–Cys204, Cys175–Cys240, Cys184–Cys484, and Cys400–Cys480. N-linked (GlcNAc...) asparagine glycosylation is found at Asn154, Asn164, Asn190, and Asn210. The short motif at 227–229 (GDS) is the GDS motif element. The active-site Nucleophile is Ser229. Asn256, Asn268, Asn373, Asn402, and Asn443 each carry an N-linked (GlcNAc...) asparagine glycan. The active-site Proton donor is Asp479. The short motif at 479 to 482 (DCTH) is the DXXH motif element. The active-site Proton acceptor is His482.

This sequence belongs to the PC-esterase family. TBL subfamily.

Its subcellular location is the golgi apparatus membrane. Its function is as follows. Xylan acetyltransferase required for 2-O- and 3-O-monoacetylation of xylosyl residues in xylan. Catalyzes the 2-O-acetylation of xylan, followed by nonenzymatic acetyl migration to the O-3 position, resulting in products that are monoacetylated at both O-2 and O-3 positions. The chain is Xylan O-acetyltransferase 12 from Oryza sativa subsp. japonica (Rice).